The primary structure comprises 316 residues: Transaldolase 1 (316 aa).

Catalysis depends on lysine 131, which acts as the Schiff-base intermediate with substrate.

Belongs to the transaldolase family. Type 1 subfamily. Homodimer.

The protein resides in the cytoplasm. It catalyses the reaction D-sedoheptulose 7-phosphate + D-glyceraldehyde 3-phosphate = D-erythrose 4-phosphate + beta-D-fructose 6-phosphate. It functions in the pathway carbohydrate degradation; pentose phosphate pathway; D-glyceraldehyde 3-phosphate and beta-D-fructose 6-phosphate from D-ribose 5-phosphate and D-xylulose 5-phosphate (non-oxidative stage): step 2/3. Its function is as follows. Transaldolase is important for the balance of metabolites in the pentose-phosphate pathway. This chain is Transaldolase 1, found in Pectobacterium atrosepticum (strain SCRI 1043 / ATCC BAA-672) (Erwinia carotovora subsp. atroseptica).